A 159-amino-acid polypeptide reads, in one-letter code: Nucleotide-binding protein Pmen_0939 (159 aa).

This sequence belongs to the YajQ family.

Its function is as follows. Nucleotide-binding protein. The chain is Nucleotide-binding protein Pmen_0939 from Ectopseudomonas mendocina (strain ymp) (Pseudomonas mendocina).